Here is a 216-residue protein sequence, read N- to C-terminus: MKIPVLDKGFVELVDVMGNDLSAVRAARVSFNMELKDEEKDRRLVEYLMRHGHESPFEHIVFTFHVKAPIFVARQWFRHRIASYNELSGRYSKLTYEFYIPPLQRFGQTRIVPEKVIEKISHVVNESYQTYMELLEAGVPREVARIVLPLNLYTRFYWTVNARSLMNFLNLRADSHAQWEIQQYAVAIAKIFREKCPWTYEAFIKYAYKGDLLREV.

The ThyX domain occupies 9–206; the sequence is GFVELVDVMG…PWTYEAFIKY (198 aa). Residues S55, 78-80, and E86 contribute to the FAD site; that span reads RHR. DUMP-binding positions include 75 to 78, 86 to 90, and R145; these read QWFR and ELSGR. Positions 78 to 88 match the ThyX motif motif; sequence RHRIASYNELS. FAD-binding positions include 161-163 and N167; that span reads NAR. R172 provides a ligand contact to dUMP. R172 functions as the Involved in ionization of N3 of dUMP, leading to its activation in the catalytic mechanism.

This sequence belongs to the thymidylate synthase ThyX family. In terms of assembly, homotetramer. It depends on FAD as a cofactor.

It catalyses the reaction dUMP + (6R)-5,10-methylene-5,6,7,8-tetrahydrofolate + NADPH + H(+) = dTMP + (6S)-5,6,7,8-tetrahydrofolate + NADP(+). The protein operates within pyrimidine metabolism; dTTP biosynthesis. Its function is as follows. Catalyzes the reductive methylation of 2'-deoxyuridine-5'-monophosphate (dUMP) to 2'-deoxythymidine-5'-monophosphate (dTMP) while utilizing 5,10-methylenetetrahydrofolate (mTHF) as the methyl donor, and NADPH and FADH(2) as the reductant. The chain is Flavin-dependent thymidylate synthase from Thermotoga neapolitana (strain ATCC 49049 / DSM 4359 / NBRC 107923 / NS-E).